The chain runs to 487 residues: Protein DETOXIFICATION 11 (487 aa).

A run of 12 helical transmembrane segments spans residues 35-55 (LICFAAPMAAVVITQSMLQII), 73-93 (FAISFCNVTGFSFIMGLSCAL), 122-142 (LVCLPLSLLWFNMGKLLVILG), 151-171 (AGRFAAWLIPGLFAYAVLQPL), 184-204 (LLITSCVVFCLHVPLCWLLVY), 211-231 (IGGALALSLSYWLYAIFLGSF), 264-284 (AAMLCLEWWSYELIILLSGLL), 293-313 (VLSVCLQTLSMTYSIPLAIAA), 330-350 (AAHIVVYAAMSLAVVDALMVG), 377-397 (MAPLVSISLILDSLQGVLSGV), 412-432 (FGAFYLWGIPIAASLAFWVHL), and 435-455 (VGLWIGIIAGAVLQTLLLALV).

This sequence belongs to the multi antimicrobial extrusion (MATE) (TC 2.A.66.1) family.

It localises to the membrane. This chain is Protein DETOXIFICATION 11, found in Arabidopsis thaliana (Mouse-ear cress).